The primary structure comprises 648 residues: Leucine-rich repeat and WD repeat-containing protein 1 (648 aa).

LRR repeat units follow at residues Lys22 to Leu43, Lys48 to Ser69, His70 to Pro91, and Glu92 to Ser113. Residues Val214–Gly262 form a disordered region. A compositionally biased stretch (basic and acidic residues) spans Arg226–Lys237. Ser259 bears the Phosphoserine mark. WD repeat units follow at residues Ala392 to Lys432, Cys443 to Gln482, Val497 to Gly536, Leu541 to Pro592, and Val616 to Cys648.

Belongs to the LRWD1 family. As to quaternary structure, integral component of the ORC complex. Directly interacts with CDT1, GMNN and ORC2. Interacts with ORC2 only when non-ubiquitinated; this interaction prevents LRWD1 ubiquitination and degradation. Some of these interactions are regulated in a cell-cycle dependent manner. Interaction with ORC1 occurs predominantly during G1. Association with phosphorylated ORC1 during mitosis is not efficient. Interaction with CDT1 occurs during G1 phase, as well as during mitosis with phosphorylated CDT1. Interaction with GMNN occurs from G1/S to mitosis. Interaction with ORC2 is observed throughout the cell cycle. The stoichiometry of the ORCA/ORC/CDT1/GMNN complex is 1:1:1:2. Interacts with CUL4A and DDB1; this interaction may lead to ubiquitination. In terms of processing, ubiquitinated; undergoes 'Lys-48'-linked polyubiquitination leading to proteasomal degradation. Ubiquitination occurs within the WD repeats at the end of the G1 phase. Ubiquitination may be catalyzed by the CUL4-DDB1 E3 ubiquitin-protein ligase complex and other E3 ligases. In terms of tissue distribution, testis-specific.

It localises to the nucleus. The protein resides in the chromosome. The protein localises to the centromere. It is found in the telomere. Its subcellular location is the cytoplasm. It localises to the cytoskeleton. The protein resides in the microtubule organizing center. The protein localises to the centrosome. It is found in the kinetochore. Its function is as follows. Required for G1/S transition. Recruits and stabilizes the origin recognition complex (ORC) onto chromatin during G1 to establish pre-replication complex (preRC) and to heterochromatic sites in post-replicated cells. Binds a combination of DNA and histone methylation repressive marks on heterochromatin. Binds histone H3 and H4 trimethylation marks H3K9me3, H3K27me3 and H4K20me3 in a cooperative manner with DNA methylation. Required for silencing of major satellite repeats. May be important ORC2, ORC3 and ORC4 stability. The protein is Leucine-rich repeat and WD repeat-containing protein 1 (LRWD1) of Mus musculus (Mouse).